Consider the following 342-residue polypeptide: Anthranilate phosphoribosyltransferase (342 aa).

5-phospho-alpha-D-ribose 1-diphosphate is bound by residues Gly-83, 86–87 (GD), Thr-91, 93–96 (NIST), 111–119 (KHGGRSVSS), and Ser-123. Gly-83 contacts anthranilate. Ser-95 is a Mg(2+) binding site. Residue Arg-169 participates in anthranilate binding. Mg(2+) is bound by residues Asp-228 and Glu-229.

This sequence belongs to the anthranilate phosphoribosyltransferase family. Homodimer. Mg(2+) serves as cofactor.

It catalyses the reaction N-(5-phospho-beta-D-ribosyl)anthranilate + diphosphate = 5-phospho-alpha-D-ribose 1-diphosphate + anthranilate. The protein operates within amino-acid biosynthesis; L-tryptophan biosynthesis; L-tryptophan from chorismate: step 2/5. Its function is as follows. Catalyzes the transfer of the phosphoribosyl group of 5-phosphorylribose-1-pyrophosphate (PRPP) to anthranilate to yield N-(5'-phosphoribosyl)-anthranilate (PRA). In Laribacter hongkongensis (strain HLHK9), this protein is Anthranilate phosphoribosyltransferase.